The chain runs to 119 residues: Basic phospholipase A2 notexin (119 aa).

7 disulfides stabilise this stretch: cysteine 11-cysteine 71, cysteine 27-cysteine 118, cysteine 29-cysteine 45, cysteine 44-cysteine 99, cysteine 51-cysteine 92, cysteine 60-cysteine 85, and cysteine 78-cysteine 90. Tyrosine 28, glycine 30, and glycine 32 together coordinate Ca(2+). Histidine 48 is an active-site residue. Aspartate 49 contacts Ca(2+). Aspartate 93 is an active-site residue.

It belongs to the phospholipase A2 family. Group I subfamily. D49 sub-subfamily. As to quaternary structure, monomer. Ca(2+) serves as cofactor. In terms of tissue distribution, expressed by the venom gland.

The protein localises to the secreted. The enzyme catalyses a 1,2-diacyl-sn-glycero-3-phosphocholine + H2O = a 1-acyl-sn-glycero-3-phosphocholine + a fatty acid + H(+). Its function is as follows. Snake venom phospholipase A2 (PLA2) that inhibits neuromuscular transmission by blocking acetylcholine release from the nerve termini. Is directly toxic to skeletal muscle upon local application in vivo (dystrophic effect). Also has direct nephrotoxicity in experimental mice; a single subcutaneous dose (1.38 ug/kg) produces renal tubular and glomerular damage within 24 hours. PLA2 catalyzes the calcium-dependent hydrolysis of the 2-acyl groups in 3-sn-phosphoglycerides. The sequence is that of Basic phospholipase A2 notexin from Notechis scutatus scutatus (Mainland tiger snake).